Reading from the N-terminus, the 354-residue chain is Ferredoxin--NADP reductase (354 aa).

FAD contacts are provided by Asp-39, Gln-47, Tyr-52, Val-92, Phe-127, Asp-296, and Thr-337.

Belongs to the ferredoxin--NADP reductase type 2 family. In terms of assembly, homodimer. The cofactor is FAD.

It carries out the reaction 2 reduced [2Fe-2S]-[ferredoxin] + NADP(+) + H(+) = 2 oxidized [2Fe-2S]-[ferredoxin] + NADPH. The protein is Ferredoxin--NADP reductase of Albidiferax ferrireducens (strain ATCC BAA-621 / DSM 15236 / T118) (Rhodoferax ferrireducens).